We begin with the raw amino-acid sequence, 172 residues long: Ribosome maturation factor RimM (172 aa).

The PRC barrel domain occupies 95–168; it reads AEGEFYYHQI…RVDVEIMEGL (74 aa).

This sequence belongs to the RimM family. Binds ribosomal protein uS19.

The protein localises to the cytoplasm. In terms of biological role, an accessory protein needed during the final step in the assembly of 30S ribosomal subunit, possibly for assembly of the head region. Essential for efficient processing of 16S rRNA. May be needed both before and after RbfA during the maturation of 16S rRNA. It has affinity for free ribosomal 30S subunits but not for 70S ribosomes. The polypeptide is Ribosome maturation factor RimM (Streptococcus equi subsp. zooepidemicus (strain MGCS10565)).